A 557-amino-acid polypeptide reads, in one-letter code: Vacuolar protein sorting-associated protein 30 (557 aa).

2 disordered regions span residues 93–149 (DDDN…ENQQ) and 218–238 (NKEI…SEKE). A compositionally biased stretch (acidic residues) spans 135–147 (DEEEQEATDEDEN). Thr-142 carries the post-translational modification Phosphothreonine. A coiled-coil region spans residues 189–322 (LINRLKSEYD…QLDKLRKINI (134 aa)). The interval 320 to 539 (INIFNATFKI…LAFSSNLLSK (220 aa)) is BARA. The tract at residues 515–540 (WTTAMKFLLTNVKWLLAFSSNLLSKS) is required for membrane-association, autophagic function during starvation and normal autophagosome morphology.

This sequence belongs to the beclin family. As to quaternary structure, component of the autophagy-specific VPS34 PI3-kinase complex I composed of VPS15, VPS30, VPS34, ATG14 and ATG38; and of the VPS34 PI3-kinase complex II composed of VPS15, VPS30, VPS34 and VPS38.

The protein localises to the endosome membrane. It localises to the vacuole membrane. Its subcellular location is the preautophagosomal structure membrane. In terms of biological role, required for cytoplasm to vacuole transport (Cvt), autophagy, nucleophagy, and mitophagy, as a part of the autophagy-specific VPS34 PI3-kinase complex I. This complex is essential to recruit the ATG8-phosphatidylinositol conjugate and the ATG12-ATG5 conjugate to the pre-autophagosomal structure. Also involved in endosome-to-Golgi retrograde transport as part of the VPS34 PI3-kinase complex II. This second complex is required for the endosome-to-Golgi retrieval of PEP1 and KEX2, and the recruitment of VPS5 and VPS7, two components of the retromer complex, to endosomal membranes (probably through the synthesis of a specific pool of phosphatidylinositol 3-phosphate recruiting the retromer to the endosomes). Also plays a role in regulation of filamentous growth. The protein is Vacuolar protein sorting-associated protein 30 of Saccharomyces cerevisiae (strain ATCC 204508 / S288c) (Baker's yeast).